The sequence spans 429 residues: MGLTAKLDKLKLKTTSEDIEDDSGHAKPDNSDDIDEVDSEYQNILLSIIAQLRPGMDLSKITLPTFILEKKSMLERITNFFQIPKLLIDSNSIEDPLDRFIGVLRWYLASWHISPKAVKKPLNPVLGEVFTCYWDELPNNKSAYYLSEQISHHPPKSSYFYIMPEEKIRVDGVVIPKSRFLGNSSAAIMEGCGYVTLGKWDNEVYVMNQPNVYVRGILFGKMRTELGDHMYVKCERNGLEANIEFKTKGFIYGTYDAIEGIIKDSETQKELFQISGKWNEVMYIKNIKTGKKEVLYDTRGSKTLKPKVRPLEEQWDFESRKLWKPTIAGLAKRNHELATEEKSKVENEQRIKAKKRLEDGVEFHPKFFREVNENDNGVKNLEYVIYKKFDLKEDPEVLRERLFTVAPIVPGQKFDEKFHYPAFKKPESN.

Belongs to the OSBP family.

The polypeptide is Oxysterol-binding protein-like protein OBPalpha (OBPALPHA) (Candida albicans (strain SC5314 / ATCC MYA-2876) (Yeast)).